Consider the following 84-residue polypeptide: Cytochrome b559 subunit alpha (84 aa).

A helical transmembrane segment spans residues 22-36; it reads VIHSITIPALFVAGW. His24 serves as a coordination point for heme.

The protein belongs to the PsbE/PsbF family. As to quaternary structure, heterodimer of an alpha subunit and a beta subunit. PSII is composed of 1 copy each of membrane proteins PsbA, PsbB, PsbC, PsbD, PsbE, PsbF, PsbH, PsbI, PsbJ, PsbK, PsbL, PsbM, PsbT, PsbX, PsbY, PsbZ, Psb30/Ycf12, at least 3 peripheral proteins of the oxygen-evolving complex and a large number of cofactors. It forms dimeric complexes. Heme b is required as a cofactor.

Its subcellular location is the plastid. It is found in the chloroplast thylakoid membrane. In terms of biological role, this b-type cytochrome is tightly associated with the reaction center of photosystem II (PSII). PSII is a light-driven water:plastoquinone oxidoreductase that uses light energy to abstract electrons from H(2)O, generating O(2) and a proton gradient subsequently used for ATP formation. It consists of a core antenna complex that captures photons, and an electron transfer chain that converts photonic excitation into a charge separation. In Porphyra purpurea (Red seaweed), this protein is Cytochrome b559 subunit alpha.